The primary structure comprises 333 residues: Geranylgeranyl pyrophosphate synthase olcC (333 aa).

K61, R64, and H93 together coordinate isopentenyl diphosphate. Positions 100 and 104 each coordinate Mg(2+). R109 is a dimethylallyl diphosphate binding site. R110 provides a ligand contact to isopentenyl diphosphate. Residues K187, T188, and Q221 each contribute to the dimethylallyl diphosphate site. D224 serves as a coordination point for Mg(2+). Residues N228, K238, and K248 each coordinate dimethylallyl diphosphate.

It belongs to the FPP/GGPP synthase family. Mg(2+) is required as a cofactor.

It carries out the reaction isopentenyl diphosphate + dimethylallyl diphosphate = (2E)-geranyl diphosphate + diphosphate. The enzyme catalyses isopentenyl diphosphate + (2E)-geranyl diphosphate = (2E,6E)-farnesyl diphosphate + diphosphate. It catalyses the reaction isopentenyl diphosphate + (2E,6E)-farnesyl diphosphate = (2E,6E,10E)-geranylgeranyl diphosphate + diphosphate. Its pathway is secondary metabolite biosynthesis; terpenoid biosynthesis. Its function is as follows. Geranylgeranyl pyrophosphate synthase; part of the gene cluster that mediates the biosynthesis of 15-deoxyoxalicine B. The first step of the pathway is the synthesis of nicotinyl-CoA from nicotinic acid by the nicotinic acid-CoA ligase olcI. Nicotinyl-CoA is then a substrate of polyketide synthase olcA to produce 4-hydroxy-6-(3-pyridinyl)-2H-pyran-2-one (HPPO) which is further prenylated by the polyprenyl transferase olcH to yield geranylgeranyl-HPPO. Geranylgeranyl pyrophosphate is provided by the cluster-specific geranylgeranyl pyrophosphate synthase olcC. The FAD-dependent monooxygenase olcE catalyzes the epoxidation of geranylgeranyl-HPPO and the terpene cyclase olcD catalyzes the cyclization of the terpenoid component, resulting in the formation of the tricyclic terpene moiety seen in predecaturin E. The cytochrome P450 monooxygenase then catalyzes the allylic oxidation of predecaturin E, which is followed by spirocylization with concomitant loss of one molecule of water to form decaturin E. Decaturin E is the substrate of the cytochrome P450 monooxygenase olcJ which hydroxylates it at the C-29 position to form decaturin F. The short-chain dehydrogenase/reductase olcF may catalyze the oxidation of decaturin F to generate the 29-hydroxyl-27-one intermediate, and subsequent hemiacetal formation probably leads to the formation of decaturin C. The dioxygenase olcK may be a peroxisomal enzyme that catalyzes the hydroxylation of decaturin C into decaturin A once decaturin C is shuttled into the peroxisome by the MFS transporter olcL. Finally the cytochrome P450 monooxygenase olcB catalyzes the oxidative rearrangement to yield 15-deoxyoxalicine B. In the absence of olcJ, decaturin E may be shunted to a pathway in which it is oxidized to a ketone, possibly by olcF, to form decaturin D, which undergoes further allylic oxidation to yield decaturin G. Moreover, in the absence of oclK or oclL, oclB can convert decaturin C into 15-deoxyoxalicine A. The polypeptide is Geranylgeranyl pyrophosphate synthase olcC (Penicillium canescens).